A 354-amino-acid chain; its full sequence is Uroporphyrinogen decarboxylase (354 aa).

Substrate is bound by residues 27 to 31 (RQAGR), aspartate 77, tyrosine 154, threonine 209, and histidine 327.

Belongs to the uroporphyrinogen decarboxylase family. Homodimer.

The protein resides in the cytoplasm. The catalysed reaction is uroporphyrinogen III + 4 H(+) = coproporphyrinogen III + 4 CO2. It functions in the pathway porphyrin-containing compound metabolism; protoporphyrin-IX biosynthesis; coproporphyrinogen-III from 5-aminolevulinate: step 4/4. Its function is as follows. Catalyzes the decarboxylation of four acetate groups of uroporphyrinogen-III to yield coproporphyrinogen-III. The polypeptide is Uroporphyrinogen decarboxylase (Enterobacter sp. (strain 638)).